The chain runs to 483 residues: MKQTSIREQYTRPAMRRIETIHFVGIGGAGMGGIAEVLAFEGYRITGSDIAHSAMTDRLIKAGAEVFIGHHENNVKDANVVVVSSAIDETNPEIIAAKAARVPVVRRAEMLAELMRFRHGIAIAGTHGKTTTTSLIASIYAQAGLDPTFIIGGLLNSAGSNAKVGKSDFLIAEADESDASFLHLQPMVSVITNIEEDHMETYGGSLEKMKDTYVDFIHNLPFYGLAVVCIDSEVASELIPRFGRPVITYGESSDADYRMSDFSQSANTCKFTVTNKQGESLTATLNMPGKHNALNATAAIAVAKDQNIANFAILEALQKFEGIGRRFQHYGEFENERGSVMLVDDYGHHPSEVAATITAAREGWPDKRLVMVYQPHRFTRTRDLYEDFVKVLAEVDQLLLLDVYSAGEEPIVGADSKSLCRSLRQRGKEPRHVANSAELASVLADCLQNNDLVLTQGAGNIGQLVKTLAATGMSIEKLKQGEV.

125–131 (GTHGKTT) lines the ATP pocket.

This sequence belongs to the MurCDEF family.

It localises to the cytoplasm. The enzyme catalyses UDP-N-acetyl-alpha-D-muramate + L-alanine + ATP = UDP-N-acetyl-alpha-D-muramoyl-L-alanine + ADP + phosphate + H(+). It participates in cell wall biogenesis; peptidoglycan biosynthesis. Functionally, cell wall formation. This is UDP-N-acetylmuramate--L-alanine ligase from Pseudoalteromonas translucida (strain TAC 125).